A 384-amino-acid polypeptide reads, in one-letter code: S-adenosylmethionine synthase (384 aa).

His-15 lines the ATP pocket. Mg(2+) is bound at residue Asp-17. Residue Glu-43 participates in K(+) binding. 2 residues coordinate L-methionine: Glu-56 and Gln-99. Positions 99–109 are flexible loop; sequence QSSDINQGVDR. ATP contacts are provided by residues 164-166, 230-231, Asp-239, 245-246, Ala-262, and Lys-266; these read DAK, RF, and RK. L-methionine is bound at residue Asp-239. Position 270 (Lys-270) interacts with L-methionine.

It belongs to the AdoMet synthase family. Homotetramer; dimer of dimers. Mg(2+) is required as a cofactor. The cofactor is K(+).

The protein resides in the cytoplasm. It carries out the reaction L-methionine + ATP + H2O = S-adenosyl-L-methionine + phosphate + diphosphate. The protein operates within amino-acid biosynthesis; S-adenosyl-L-methionine biosynthesis; S-adenosyl-L-methionine from L-methionine: step 1/1. Catalyzes the formation of S-adenosylmethionine (AdoMet) from methionine and ATP. The overall synthetic reaction is composed of two sequential steps, AdoMet formation and the subsequent tripolyphosphate hydrolysis which occurs prior to release of AdoMet from the enzyme. This is S-adenosylmethionine synthase from Histophilus somni (strain 129Pt) (Haemophilus somnus).